Here is a 239-residue protein sequence, read N- to C-terminus: tRNA (guanine-N(7)-)-methyltransferase (239 aa).

E69, E94, D121, and D144 together coordinate S-adenosyl-L-methionine. D144 is a catalytic residue. Position 148 (K148) interacts with substrate. Positions 150-155 (RHNKRR) are interaction with RNA. Substrate is bound by residues D180 and 217–220 (TKFE).

This sequence belongs to the class I-like SAM-binding methyltransferase superfamily. TrmB family. As to quaternary structure, monomer.

The enzyme catalyses guanosine(46) in tRNA + S-adenosyl-L-methionine = N(7)-methylguanosine(46) in tRNA + S-adenosyl-L-homocysteine. The protein operates within tRNA modification; N(7)-methylguanine-tRNA biosynthesis. Functionally, catalyzes the formation of N(7)-methylguanine at position 46 (m7G46) in tRNA. This Sodalis glossinidius (strain morsitans) protein is tRNA (guanine-N(7)-)-methyltransferase.